We begin with the raw amino-acid sequence, 516 residues long: Delta(24)-sterol reductase (516 aa).

The signal sequence occupies residues 1–22 (MEPAVSLAVCALLFLLWVRVKG). Residues 23–31 (LEFVLIHQR) are Lumenal-facing. A helical membrane pass occupies residues 32 to 52 (WVFVCLFLLPLSLIFDIYYYV). The Cytoplasmic segment spans residues 53-516 (RAWVVFKLSS…YDKICKAARH (464 aa)). In terms of domain architecture, FAD-binding PCMH-type spans 58–234 (FKLSSAPRLH…VAAEIRIIPA (177 aa)). 163 to 175 (TVGGLIMGTGIES) lines the FAD pocket.

The protein belongs to the FAD-binding oxidoreductase/transferase type 4 family. The cofactor is FAD.

It localises to the endoplasmic reticulum membrane. The protein resides in the golgi apparatus membrane. The enzyme catalyses 5alpha-cholest-8-en-3beta-ol + NADP(+) = zymosterol + NADPH + H(+). It catalyses the reaction cholesterol + NADP(+) = desmosterol + NADPH + H(+). It carries out the reaction lanosterol + NADPH + H(+) = 24,25-dihydrolanosterol + NADP(+). Its pathway is steroid biosynthesis; cholesterol biosynthesis. Functionally, catalyzes the reduction of the delta-24 double bond of sterol intermediates during cholesterol biosynthesis. In addition to its cholesterol-synthesizing activity, can protect cells from oxidative stress by reducing caspase 3 activity during apoptosis induced by oxidative stress. Also protects against amyloid-beta peptide-induced apoptosis. The sequence is that of Delta(24)-sterol reductase (Dhcr24) from Mus musculus (Mouse).